Here is an 836-residue protein sequence, read N- to C-terminus: Protein O-mannosyl-transferase TMTC2 (836 aa).

A helical membrane pass occupies residues Met-1–Ala-21. The Extracellular segment spans residues Asp-22 to Pro-84. The chain crosses the membrane as a helical span at residues Trp-85–Phe-105. Residues Ser-106–Lys-107 are Cytoplasmic-facing. A helical transmembrane segment spans residues Ile-108 to Ile-128. Topologically, residues His-129–Ala-132 are extracellular. The chain crosses the membrane as a helical span at residues Val-133 to Leu-153. Residues Cys-154–Arg-162 lie on the Cytoplasmic side of the membrane. The next 2 helical transmembrane spans lie at Gly-163–Leu-184 and Trp-185–Phe-204. At His-205 to Lys-220 the chain is on the cytoplasmic side. The helical transmembrane segment at Asn-221 to Ala-241 threads the bilayer. Over Arg-242–His-312 the chain is Extracellular. Residues Thr-313–Val-333 form a helical membrane-spanning segment. At Asp-334–Ser-399 the chain is on the cytoplasmic side. Residues Leu-400–Ala-420 form a helical membrane-spanning segment. At Glu-421–Arg-422 the chain is on the extracellular side. Residues Val-423–Tyr-443 traverse the membrane as a helical segment. The Cytoplasmic segment spans residues Val-444–Arg-449. The chain crosses the membrane as a helical span at residues Phe-450 to Thr-470. The Extracellular segment spans residues Ala-471–Thr-836. TPR repeat units lie at residues Ala-493 to Met-526, Ala-527 to Leu-560, Ala-561 to Asn-594, Thr-606 to Gln-639, Gln-643 to His-676, Ile-677 to Lys-710, Gly-711 to Glu-744, Phe-745 to Tyr-778, and Pro-779 to Asp-812.

It belongs to the TMTC family.

The protein resides in the membrane. It is found in the endoplasmic reticulum. It carries out the reaction a di-trans,poly-cis-dolichyl beta-D-mannosyl phosphate + L-seryl-[protein] = 3-O-(alpha-D-mannosyl)-L-seryl-[protein] + a di-trans,poly-cis-dolichyl phosphate + H(+). The enzyme catalyses a di-trans,poly-cis-dolichyl beta-D-mannosyl phosphate + L-threonyl-[protein] = 3-O-(alpha-D-mannosyl)-L-threonyl-[protein] + a di-trans,poly-cis-dolichyl phosphate + H(+). It participates in protein modification; protein glycosylation. Its function is as follows. Transfers mannosyl residues to the hydroxyl group of serine or threonine residues. The 4 members of the TMTC family are O-mannosyl-transferases dedicated primarily to the cadherin superfamily, each member seems to have a distinct role in decorating the cadherin domains with O-linked mannose glycans at specific regions. Also acts as O-mannosyl-transferase on other proteins such as PDIA3. This Homo sapiens (Human) protein is Protein O-mannosyl-transferase TMTC2.